A 144-amino-acid polypeptide reads, in one-letter code: Monooxygenase ptaG (144 aa).

Belongs to the avfA family.

Its pathway is secondary metabolite biosynthesis. Monooxygenase; part of the gene cluster that mediates the biosynthesis of pestheic acid, a diphenyl ether which is a biosynthetic precursor of the unique chloropupukeananes. The biosynthesis initiates from condensation of acetate and malonate units catalyzed by the non-reducing PKS ptaA. As the ptaA protein is TE/CLC domain-deficient, hydrolysis and Claisen cyclization of the polyketide could be catalyzed by ptaB containing a beta-lactamase domain. The ptaB protein might hydrolyze the thioester bond between the ACP of ptaA and the intermediate to release atrochrysone carboxylic acid, which is spontaneously dehydrated to form endocrocin anthrone. Endocrocin anthrone is then converted to endocrocin, catalyzed by the anthrone oxygenase ptaC. Spontaneous decarboxylation of endocrocin occurs to generate emodin. An O-methyltransferase (ptaH or ptaI) could methylate emodin to form physcion. PtaJ could then catalyze the oxidative cleavage of physcion, and rotation of the intermediate could then afford desmethylisosulochrin. PtaF, a putative NADH-dependent oxidoreductase, might also participate in the oxidative cleavage step. Desmethylisosulochrin is then transformed by another O-methyltransferase (ptaH or ptaI) to form isosulochrin. Chlorination of isosulochrin by ptaM in the cyclohexadienone B ring then produces chloroisosulochrin. PtaE is responsible for the oxidative coupling reactions of both benzophenones isosulochrin and chloroisosulochrin to RES-1214-1 and pestheic acid respectively, regardless of chlorination. The protein is Monooxygenase ptaG of Pestalotiopsis fici (strain W106-1 / CGMCC3.15140).